We begin with the raw amino-acid sequence, 77 residues long: Small ribosomal subunit protein bS16 (77 aa).

This sequence belongs to the bacterial ribosomal protein bS16 family.

The protein is Small ribosomal subunit protein bS16 of Wolinella succinogenes (strain ATCC 29543 / DSM 1740 / CCUG 13145 / JCM 31913 / LMG 7466 / NCTC 11488 / FDC 602W) (Vibrio succinogenes).